A 1377-amino-acid chain; its full sequence is DNA-directed RNA polymerase subunit beta' (1377 aa).

Zn(2+) contacts are provided by cysteine 60, cysteine 62, cysteine 75, and cysteine 78. Positions 449, 451, and 453 each coordinate Mg(2+). Zn(2+)-binding residues include cysteine 777, cysteine 851, cysteine 858, and cysteine 861.

This sequence belongs to the RNA polymerase beta' chain family. The RNAP catalytic core consists of 2 alpha, 1 beta, 1 beta' and 1 omega subunit. When a sigma factor is associated with the core the holoenzyme is formed, which can initiate transcription. It depends on Mg(2+) as a cofactor. Zn(2+) is required as a cofactor.

It catalyses the reaction RNA(n) + a ribonucleoside 5'-triphosphate = RNA(n+1) + diphosphate. DNA-dependent RNA polymerase catalyzes the transcription of DNA into RNA using the four ribonucleoside triphosphates as substrates. This is DNA-directed RNA polymerase subunit beta' from Borrelia recurrentis (strain A1).